The chain runs to 184 residues: Ras-related protein Rap-1A (184 aa).

GTP is bound by residues 10–18 (GSGGVGKSA), 29–35 (VEKYDPT), G60, and 116–119 (NKCD). Residues 32–40 (YDPTIEDSY) carry the Effector region motif. Cysteine methyl ester is present on C181. The S-geranylgeranyl cysteine moiety is linked to residue C181. Residues 182–184 (LLL) constitute a propeptide, removed in mature form.

The protein belongs to the small GTPase superfamily. Ras family. As to quaternary structure, found in a complex, at least composed of ITGB1BP1, KRIT1 and RAP1A. Interacts (active GTP-bound form preferentially) with KRIT1 (via C-terminus FERM domain); the interaction does not induce the opening conformation of KRIT1. Found in a complex composed of CDH1, RAP1A and PKP3; PKP3 acts as a scaffold protein within the complex, the complex is required for CDH1 localization to mature desmosome cell junctions. In its GTP-bound form interacts with PLCE1 and RADIL. Interacts with SGSM1, SGSM2 and SGSM3. Interacts (via GTP-bound active form) with RAPGEF2 (via Ras-associating domain). Interacts with TBC1D21. Interacts with RAP1GDS1.

It localises to the cell membrane. The protein localises to the cytoplasm. It is found in the perinuclear region. Its subcellular location is the cell junction. The protein resides in the early endosome. It catalyses the reaction GTP + H2O = GDP + phosphate + H(+). Activated by guanine nucleotide-exchange factors (GEF) EPAC and EPAC2 in a cAMP-dependent manner, and GFR. Functionally, counteracts the mitogenic function of Ras, at least partly because it can interact with Ras GAPs and RAF in a competitive manner. Together with ITGB1BP1, regulates KRIT1 localization to microtubules and membranes. Plays a role in nerve growth factor (NGF)-induced neurite outgrowth. Plays a role in the regulation of embryonic blood vessel formation. Involved in the establishment of basal endothelial barrier function. Facilitates the progressive accumulation of CDH1 at mature desmosome junctions via cAMP-dependent signaling and its interaction with PKP3. May be involved in the regulation of the vascular endothelial growth factor receptor KDR expression at endothelial cell-cell junctions. This is Ras-related protein Rap-1A (RAP1A) from Bos taurus (Bovine).